The primary structure comprises 794 residues: Phenylalanine--tRNA ligase beta subunit (794 aa).

Residues 39-154 (SSSFSSIITA…ANTPLGESAC (116 aa)) form the tRNA-binding domain. The B5 domain maps to 403–481 (PPSPTLTLRT…QPWKIEKKKA (79 aa)). Residues aspartate 457, aspartate 463, glutamate 466, and glutamate 467 each contribute to the Mg(2+) site. In terms of domain architecture, FDX-ACB spans 697 to 793 (PIYPSSFRDI…QLDDTKGTID (97 aa)).

This sequence belongs to the phenylalanyl-tRNA synthetase beta subunit family. Type 1 subfamily. In terms of assembly, tetramer of two alpha and two beta subunits. Mg(2+) serves as cofactor.

The protein resides in the cytoplasm. The catalysed reaction is tRNA(Phe) + L-phenylalanine + ATP = L-phenylalanyl-tRNA(Phe) + AMP + diphosphate + H(+). The polypeptide is Phenylalanine--tRNA ligase beta subunit (Chlamydia abortus (strain DSM 27085 / S26/3) (Chlamydophila abortus)).